Here is a 473-residue protein sequence, read N- to C-terminus: MGNYHPHGNASIYNTLVRMAQPWSLRYPLVNGQGNFGSPGNNPPAAMRYCCTGDALVRLPFGHSVRIGNFVPAACPNSDNAVNLKVLDRHGDPVVADQLFHSGEHQTYTVRTAEGYEVTGTSNHPLLCLVDVGGVPTLLWKLIEEIRPDDHVVLQRTPPVEFGPADWHDVMEALLLGAFISEGFVSEVRAGFNNCDRDYFAMVVGAYDAVVGGRRYVSSRRIASGSTLHELDIQNIKELKEARLGDLCGQRPADKSVPDWLWHSPAAVKRVFLQALFEGGGSCSALPRNMIQISYSTRSRQLAVDVQQMLLEFGIITRRYRHAVGEHKVLITNRAQAELFATRVGFGGAKQEKLTKILGSMPPCAGMDSDHVPGLARFIRKHCGSRWVDKDWLNRHNVDRIQRWRTSGEKILSHIADPDVRAIATDLTDGRFYYAKVASVTEAGVQPVYSLRVDTDEHAFLTNGFVSHNTEAR.

The region spanning 1–473 is the Topo IIA-type catalytic domain; that stretch reads MGNYHPHGNA…GFVSHNTEAR (473 aa). The active-site O-(5'-phospho-DNA)-tyrosine intermediate is Y49. A DOD-type homing endonuclease domain is found at 175–315; that stretch reads LLGAFISEGF…VQQMLLEFGI (141 aa).

It belongs to the type II topoisomerase GyrA/ParC subunit family. In terms of assembly, heterotetramer, composed of two GyrA and two GyrB chains. In the heterotetramer, GyrA contains the active site tyrosine that forms a transient covalent intermediate with DNA, while GyrB binds cofactors and catalyzes ATP hydrolysis. Post-translationally, this protein undergoes a protein self splicing that involves a post-translational excision of the intervening region (intein) followed by peptide ligation.

It is found in the cytoplasm. It catalyses the reaction ATP-dependent breakage, passage and rejoining of double-stranded DNA.. Functionally, a type II topoisomerase that negatively supercoils closed circular double-stranded (ds) DNA in an ATP-dependent manner to modulate DNA topology and maintain chromosomes in an underwound state. Negative supercoiling favors strand separation, and DNA replication, transcription, recombination and repair, all of which involve strand separation. Also able to catalyze the interconversion of other topological isomers of dsDNA rings, including catenanes and knotted rings. Type II topoisomerases break and join 2 DNA strands simultaneously in an ATP-dependent manner. The chain is DNA gyrase subunit A (gyrA) from Mycobacterium malmoense.